Here is a 288-residue protein sequence, read N- to C-terminus: 33 kDa chaperonin (288 aa).

Disulfide bonds link C235/C237 and C268/C271.

It belongs to the HSP33 family. Post-translationally, under oxidizing conditions two disulfide bonds are formed involving the reactive cysteines. Under reducing conditions zinc is bound to the reactive cysteines and the protein is inactive.

It is found in the cytoplasm. In terms of biological role, redox regulated molecular chaperone. Protects both thermally unfolding and oxidatively damaged proteins from irreversible aggregation. Plays an important role in the bacterial defense system toward oxidative stress. This Streptococcus thermophilus (strain CNRZ 1066) protein is 33 kDa chaperonin.